Here is a 501-residue protein sequence, read N- to C-terminus: Ectoine/hydroxyectoine transporter (501 aa).

Transmembrane regions (helical) follow at residues 9 to 29, 45 to 65, 86 to 106, 137 to 157, 190 to 210, 220 to 240, 258 to 278, 311 to 331, 343 to 363, 395 to 415, 441 to 461, and 465 to 485; these read PVFYVSAFVVFLLVIIGATLP, IHFGWFYLLAVFVFVVFLITL, FFTWIGMLFSAGFGAGLVFWG, AFFHWGVSQWSVFAIVGLVIA, LAVIATVMGVATSLGLGILQM, VPTSIWVQMAIAGVMLITYLI, LGSLFIIIVFVFMAGPTVFIL, WTIFYWAWSTAWSPFVGAFIA, VLGVLVVSPAIACIWIAAFGG, LPMTTILSILSIFLIFTFLVT, IVWGLLITAIAVVLLLAGGLE, and TASLISALPFTVILLLMMASF.

This sequence belongs to the BCCT transporter (TC 2.A.15) family.

Its subcellular location is the cell inner membrane. Mediates the import of ectoine and hydroxyectoine, which function as osmotic and cold stress protectants. Also has minor uptake activities for the compatible solutes proline and glycine betaine. The sequence is that of Ectoine/hydroxyectoine transporter from Virgibacillus pantothenticus.